Consider the following 217-residue polypeptide: Outer-membrane lipoprotein LolB (217 aa).

The signal sequence occupies residues 1–20 (MSRAVRTLALGGLVLVGLSA). Cys21 is lipidated: N-palmitoyl cysteine. A lipid anchor (S-diacylglycerol cysteine) is attached at Cys21.

The protein belongs to the LolB family. Monomer.

The protein resides in the cell outer membrane. Functionally, plays a critical role in the incorporation of lipoproteins in the outer membrane after they are released by the LolA protein. The chain is Outer-membrane lipoprotein LolB from Xanthomonas euvesicatoria pv. vesicatoria (strain 85-10) (Xanthomonas campestris pv. vesicatoria).